Reading from the N-terminus, the 490-residue chain is Bifunctional protein HldE (490 aa).

A ribokinase region spans residues 1–330; the sequence is MSRFDTLLQS…RKILPHASLA (330 aa). Residue 205 to 208 coordinates ATP; that stretch reads NRKE. Residue Asp275 is part of the active site. The tract at residues 358 to 490 is cytidylyltransferase; the sequence is FTNGCFDILH…LVEKAREGTT (133 aa).

In the N-terminal section; belongs to the carbohydrate kinase PfkB family. It in the C-terminal section; belongs to the cytidylyltransferase family. In terms of assembly, homodimer.

The enzyme catalyses D-glycero-beta-D-manno-heptose 7-phosphate + ATP = D-glycero-beta-D-manno-heptose 1,7-bisphosphate + ADP + H(+). It catalyses the reaction D-glycero-beta-D-manno-heptose 1-phosphate + ATP + H(+) = ADP-D-glycero-beta-D-manno-heptose + diphosphate. It participates in nucleotide-sugar biosynthesis; ADP-L-glycero-beta-D-manno-heptose biosynthesis; ADP-L-glycero-beta-D-manno-heptose from D-glycero-beta-D-manno-heptose 7-phosphate: step 1/4. It functions in the pathway nucleotide-sugar biosynthesis; ADP-L-glycero-beta-D-manno-heptose biosynthesis; ADP-L-glycero-beta-D-manno-heptose from D-glycero-beta-D-manno-heptose 7-phosphate: step 3/4. In terms of biological role, catalyzes the phosphorylation of D-glycero-D-manno-heptose 7-phosphate at the C-1 position to selectively form D-glycero-beta-D-manno-heptose-1,7-bisphosphate. Its function is as follows. Catalyzes the ADP transfer from ATP to D-glycero-beta-D-manno-heptose 1-phosphate, yielding ADP-D-glycero-beta-D-manno-heptose. This chain is Bifunctional protein HldE, found in Rhodopseudomonas palustris (strain BisB5).